We begin with the raw amino-acid sequence, 214 residues long: Octanoyltransferase (214 aa).

In terms of domain architecture, BPL/LPL catalytic spans 29–214; it reads SETLDEIWVL…QHLQKQLIPS (186 aa). Substrate contacts are provided by residues 69–76, 146–148, and 159–161; these read RGGEITYH, ALG, and GLA. Residue C177 is the Acyl-thioester intermediate of the active site.

The protein belongs to the LipB family.

It is found in the cytoplasm. It catalyses the reaction octanoyl-[ACP] + L-lysyl-[protein] = N(6)-octanoyl-L-lysyl-[protein] + holo-[ACP] + H(+). The protein operates within protein modification; protein lipoylation via endogenous pathway; protein N(6)-(lipoyl)lysine from octanoyl-[acyl-carrier-protein]: step 1/2. In terms of biological role, catalyzes the transfer of endogenously produced octanoic acid from octanoyl-acyl-carrier-protein onto the lipoyl domains of lipoate-dependent enzymes. Lipoyl-ACP can also act as a substrate although octanoyl-ACP is likely to be the physiological substrate. This chain is Octanoyltransferase, found in Polynucleobacter necessarius subsp. necessarius (strain STIR1).